The primary structure comprises 236 residues: Purine nucleoside phosphorylase DeoD-type (236 aa).

Residue His5 participates in a purine D-ribonucleoside binding. Residues Gly21, Arg25, Arg44, and Arg88–Thr91 each bind phosphate. A purine D-ribonucleoside-binding positions include Glu180–Glu182 and Ser204–Asp205. Asp205 (proton donor) is an active-site residue.

This sequence belongs to the PNP/UDP phosphorylase family. Homohexamer; trimer of homodimers.

The catalysed reaction is a purine D-ribonucleoside + phosphate = a purine nucleobase + alpha-D-ribose 1-phosphate. It carries out the reaction a purine 2'-deoxy-D-ribonucleoside + phosphate = a purine nucleobase + 2-deoxy-alpha-D-ribose 1-phosphate. Its function is as follows. Catalyzes the reversible phosphorolytic breakdown of the N-glycosidic bond in the beta-(deoxy)ribonucleoside molecules, with the formation of the corresponding free purine bases and pentose-1-phosphate. This chain is Purine nucleoside phosphorylase DeoD-type, found in Shewanella baltica (strain OS155 / ATCC BAA-1091).